A 329-amino-acid chain; its full sequence is Ribosomal RNA small subunit methyltransferase H (329 aa).

Residues 39-41 (GGY), Asp-56, Phe-85, Asp-106, and Gln-113 each bind S-adenosyl-L-methionine. Positions 289–308 (SGAIRPTPEEEARNPRARSA) are disordered.

The protein belongs to the methyltransferase superfamily. RsmH family.

It localises to the cytoplasm. The enzyme catalyses cytidine(1402) in 16S rRNA + S-adenosyl-L-methionine = N(4)-methylcytidine(1402) in 16S rRNA + S-adenosyl-L-homocysteine + H(+). Its function is as follows. Specifically methylates the N4 position of cytidine in position 1402 (C1402) of 16S rRNA. The chain is Ribosomal RNA small subunit methyltransferase H from Novosphingobium aromaticivorans (strain ATCC 700278 / DSM 12444 / CCUG 56034 / CIP 105152 / NBRC 16084 / F199).